Reading from the N-terminus, the 117-residue chain is Fluoride-specific ion channel FluC 2 (117 aa).

4 helical membrane-spanning segments follow: residues 1 to 21, 33 to 53, 60 to 80, and 95 to 115; these read MISIILVMIGGGFGAIARSAI, LPIATLIVNLVGSFLIGLTIG, WFPAFFVTGFLGGLTTFSTLA, and LFLNYSLLQFIIGFIACYIGY. Na(+) is bound by residues G71 and T74.

The protein belongs to the fluoride channel Fluc/FEX (TC 1.A.43) family.

It is found in the cell membrane. It catalyses the reaction fluoride(in) = fluoride(out). Na(+) is not transported, but it plays an essential structural role and its presence is essential for fluoride channel function. Fluoride-specific ion channel. Important for reducing fluoride concentration in the cell, thus reducing its toxicity. This Staphylococcus aureus (strain COL) protein is Fluoride-specific ion channel FluC 2.